The primary structure comprises 137 residues: Protein cornichon homolog 3 (137 aa).

Helical transmembrane passes span 8 to 28, 54 to 74, and 113 to 133; these read IISFLILITLLGLIVYQLISL, ILQGFLCVFYLVTGHWFMALL, and LAYIILTLFLTIFWLIYSTLD.

Belongs to the cornichon family.

The protein resides in the membrane. The sequence is that of Protein cornichon homolog 3 from Arabidopsis thaliana (Mouse-ear cress).